A 428-amino-acid chain; its full sequence is MTTLSPYDSMSPVTRAAYRAKSAAADLAPLPRAAKDDALLAVADALEVRTSEIVEANAQDVAKARAAGTSEAIVDRLTLTPERVRAIASDVRDVVALPDPVGEIVRGSTLPNGIDLRQVRVPLGVVGIIYEGRPNVTVDAAALCLKSGNAVLLRGSSSAYRSNTALVRVVRDAVGGAGLPADAVQLVPGESRESVRELMRARGLVDVLIPRGGASLISTVVQESTVPVIETGTGNCHVYVDAHADLDMAVDILINSKAQRVGVCNAAETLLVHQDVAAEFLPRALAALAEAGVTVHADERVMAHAKDSGANVVEATPEDWETEYLSYDIAAAVVDSLDRAVEHIRLWTSGHTEAIVTTSQQAARRFTQLVDSTTVAVNTSTRFTDGGQFGFGAEIGISTQKLHARGPMGLPELTSTKYIVTGDGHVRR.

The protein belongs to the gamma-glutamyl phosphate reductase family.

The protein localises to the cytoplasm. The enzyme catalyses L-glutamate 5-semialdehyde + phosphate + NADP(+) = L-glutamyl 5-phosphate + NADPH + H(+). The protein operates within amino-acid biosynthesis; L-proline biosynthesis; L-glutamate 5-semialdehyde from L-glutamate: step 2/2. Functionally, catalyzes the NADPH-dependent reduction of L-glutamate 5-phosphate into L-glutamate 5-semialdehyde and phosphate. The product spontaneously undergoes cyclization to form 1-pyrroline-5-carboxylate. The chain is Gamma-glutamyl phosphate reductase from Streptomyces coelicolor (strain ATCC BAA-471 / A3(2) / M145).